Here is a 314-residue protein sequence, read N- to C-terminus: Homoserine kinase (314 aa).

Pro-95–Ala-105 serves as a coordination point for ATP.

It belongs to the GHMP kinase family. Homoserine kinase subfamily.

It is found in the cytoplasm. The catalysed reaction is L-homoserine + ATP = O-phospho-L-homoserine + ADP + H(+). The protein operates within amino-acid biosynthesis; L-threonine biosynthesis; L-threonine from L-aspartate: step 4/5. Catalyzes the ATP-dependent phosphorylation of L-homoserine to L-homoserine phosphate. The polypeptide is Homoserine kinase (Mycolicibacterium vanbaalenii (strain DSM 7251 / JCM 13017 / BCRC 16820 / KCTC 9966 / NRRL B-24157 / PYR-1) (Mycobacterium vanbaalenii)).